Consider the following 102-residue polypeptide: UPF0147 protein MTH_1407 (102 aa).

The protein belongs to the UPF0147 family.

This chain is UPF0147 protein MTH_1407, found in Methanothermobacter thermautotrophicus (strain ATCC 29096 / DSM 1053 / JCM 10044 / NBRC 100330 / Delta H) (Methanobacterium thermoautotrophicum).